Consider the following 240-residue polypeptide: Ubiquinone biosynthesis O-methyltransferase (240 aa).

S-adenosyl-L-methionine-binding residues include arginine 44, glycine 64, aspartate 85, and methionine 129.

It belongs to the methyltransferase superfamily. UbiG/COQ3 family.

The enzyme catalyses a 3-demethylubiquinol + S-adenosyl-L-methionine = a ubiquinol + S-adenosyl-L-homocysteine + H(+). The catalysed reaction is a 3-(all-trans-polyprenyl)benzene-1,2-diol + S-adenosyl-L-methionine = a 2-methoxy-6-(all-trans-polyprenyl)phenol + S-adenosyl-L-homocysteine + H(+). Its pathway is cofactor biosynthesis; ubiquinone biosynthesis. Functionally, O-methyltransferase that catalyzes the 2 O-methylation steps in the ubiquinone biosynthetic pathway. This chain is Ubiquinone biosynthesis O-methyltransferase, found in Escherichia coli O9:H4 (strain HS).